The sequence spans 179 residues: Ribulose bisphosphate carboxylase small subunit, chloroplastic 3 (179 aa).

A chloroplast-targeting transit peptide spans 1-58; that stretch reads MASSATMLSSVATAARAAPAQASMVAPFVGLKSASAFPVTQKPATGLSTLPSNGGRVQ.

It belongs to the RuBisCO small chain family. Heterohexadecamer of 8 large and 8 small subunits.

It localises to the plastid. Its subcellular location is the chloroplast. In terms of biological role, ruBisCO catalyzes two reactions: the carboxylation of D-ribulose 1,5-bisphosphate, the primary event in carbon dioxide fixation, as well as the oxidative fragmentation of the pentose substrate. Both reactions occur simultaneously and in competition at the same active site. Although the small subunit is not catalytic it is essential for maximal activity. This Fritillaria agrestis (Stinkbells) protein is Ribulose bisphosphate carboxylase small subunit, chloroplastic 3.